A 59-amino-acid polypeptide reads, in one-letter code: Chromatin protein Cren7 (59 aa).

Belongs to the Cren7 family. As to quaternary structure, monomer. Post-translationally, methylated at multiple sites, to varying extents.

The protein resides in the chromosome. The protein localises to the cytoplasm. Its function is as follows. A chromatin protein, binds double-stranded DNA without sequence specificity. Constrains negative DNA supercoils. The protein is Chromatin protein Cren7 of Pyrobaculum aerophilum (strain ATCC 51768 / DSM 7523 / JCM 9630 / CIP 104966 / NBRC 100827 / IM2).